A 230-amino-acid polypeptide reads, in one-letter code: LexA repressor (230 aa).

A DNA-binding region (H-T-H motif) is located at residues 28 to 48 (IREIGEALDIRSTNGVNDHLK). Residues Ser148 and Lys185 each act as for autocatalytic cleavage activity in the active site.

It belongs to the peptidase S24 family. As to quaternary structure, homodimer.

It catalyses the reaction Hydrolysis of Ala-|-Gly bond in repressor LexA.. Its function is as follows. Represses a number of genes involved in the response to DNA damage (SOS response), including recA and lexA. In the presence of single-stranded DNA, RecA interacts with LexA causing an autocatalytic cleavage which disrupts the DNA-binding part of LexA, leading to derepression of the SOS regulon and eventually DNA repair. The polypeptide is LexA repressor (Anaeromyxobacter sp. (strain K)).